The primary structure comprises 370 residues: Putative F-box/kelch-repeat protein At3g46050 (370 aa).

The region spanning 15-61 is the F-box domain; that stretch reads PTSFSSLPDDIVLNCLARVSRFHYPTLSLVCKGFRSLLDSRELHATR. 2 Kelch repeats span residues 119–165 and 167–212; these read KIYI…VIND and IYVI…VPGS.

This chain is Putative F-box/kelch-repeat protein At3g46050, found in Arabidopsis thaliana (Mouse-ear cress).